A 240-amino-acid polypeptide reads, in one-letter code: Biosynthetic peptidoglycan transglycosylase (240 aa).

The chain crosses the membrane as a helical span at residues 15–35 (WMVYLGAVVAIAWLATQAFYF).

The protein belongs to the glycosyltransferase 51 family.

The protein resides in the cell inner membrane. The catalysed reaction is [GlcNAc-(1-&gt;4)-Mur2Ac(oyl-L-Ala-gamma-D-Glu-L-Lys-D-Ala-D-Ala)](n)-di-trans,octa-cis-undecaprenyl diphosphate + beta-D-GlcNAc-(1-&gt;4)-Mur2Ac(oyl-L-Ala-gamma-D-Glu-L-Lys-D-Ala-D-Ala)-di-trans,octa-cis-undecaprenyl diphosphate = [GlcNAc-(1-&gt;4)-Mur2Ac(oyl-L-Ala-gamma-D-Glu-L-Lys-D-Ala-D-Ala)](n+1)-di-trans,octa-cis-undecaprenyl diphosphate + di-trans,octa-cis-undecaprenyl diphosphate + H(+). It functions in the pathway cell wall biogenesis; peptidoglycan biosynthesis. In terms of biological role, peptidoglycan polymerase that catalyzes glycan chain elongation from lipid-linked precursors. The chain is Biosynthetic peptidoglycan transglycosylase from Paraburkholderia phytofirmans (strain DSM 17436 / LMG 22146 / PsJN) (Burkholderia phytofirmans).